Reading from the N-terminus, the 447-residue chain is GTPase Der (447 aa).

EngA-type G domains follow at residues 4–165 and 180–357; these read KIIT…SVEE and LQIV…KIWN. Residues 10–17, 57–61, 119–122, 186–193, 233–237, and 298–301 contribute to the GTP site; these read GRPNVGKS, DTPGL, NKCE, GRPNAGKS, DTAGL, and NKWD. The 86-residue stretch at 358–443 folds into the KH-like domain; sequence KKITTNKLNK…PIRFTYVKNK (86 aa).

It belongs to the TRAFAC class TrmE-Era-EngA-EngB-Septin-like GTPase superfamily. EngA (Der) GTPase family. As to quaternary structure, associates with the 50S ribosomal subunit.

In terms of biological role, GTPase that plays an essential role in the late steps of ribosome biogenesis. The polypeptide is GTPase Der (Rickettsia prowazekii (strain Madrid E)).